Consider the following 868-residue polypeptide: Homeobox-leucine zipper protein HOX29 (868 aa).

Residues 9–72 constitute a DNA-binding region (homeobox); it reads DASKYVRYTP…NRRCREKQRK (64 aa). Residues 64–106 adopt a coiled-coil conformation; it reads RRCREKQRKESSRLQALNRKLTAMNKLLMEENDRLQKQVSQLV. Residues 150–171 form a disordered region; that stretch reads VTSGHHHQQQQHNVVQPPPRDA. Residues 169–397 enclose the START domain; it reads RDASPAGLMS…VAHEDTRSVI (229 aa).

Belongs to the HD-ZIP homeobox family. Class III subfamily. Expressed in phloem.

Its subcellular location is the nucleus. In terms of biological role, probable transcription factor that may be necessary for the proper patterning of vascular bundles. The chain is Homeobox-leucine zipper protein HOX29 (HOX29) from Oryza sativa subsp. japonica (Rice).